The primary structure comprises 68 residues: DNA-directed RNA polymerase subunit omega (68 aa).

This sequence belongs to the RNA polymerase subunit omega family. As to quaternary structure, the RNAP catalytic core consists of 2 alpha, 1 beta, 1 beta' and 1 omega subunit. When a sigma factor is associated with the core the holoenzyme is formed, which can initiate transcription.

The catalysed reaction is RNA(n) + a ribonucleoside 5'-triphosphate = RNA(n+1) + diphosphate. Functionally, promotes RNA polymerase assembly. Latches the N- and C-terminal regions of the beta' subunit thereby facilitating its interaction with the beta and alpha subunits. In Desulfatibacillum aliphaticivorans, this protein is DNA-directed RNA polymerase subunit omega.